Consider the following 102-residue polypeptide: UPF0122 protein MPN_424 (102 aa).

This sequence belongs to the UPF0122 family.

In terms of biological role, might take part in the signal recognition particle (SRP) pathway. This is inferred from the conservation of its genetic proximity to ftsY/ffh. May be a regulatory protein. This Mycoplasma pneumoniae (strain ATCC 29342 / M129 / Subtype 1) (Mycoplasmoides pneumoniae) protein is UPF0122 protein MPN_424.